A 370-amino-acid chain; its full sequence is Flagellar P-ring protein (370 aa).

The N-terminal stretch at 1–27 (MPARPIPVPLLALALAAALAVPSPAAA) is a signal peptide.

This sequence belongs to the FlgI family. In terms of assembly, the basal body constitutes a major portion of the flagellar organelle and consists of four rings (L,P,S, and M) mounted on a central rod.

The protein resides in the periplasm. It is found in the bacterial flagellum basal body. In terms of biological role, assembles around the rod to form the L-ring and probably protects the motor/basal body from shearing forces during rotation. This Anaeromyxobacter sp. (strain K) protein is Flagellar P-ring protein.